Consider the following 706-residue polypeptide: Termination factor NPH-I homolog (706 aa).

The Helicase ATP-binding domain occupies 62–227; it reads IGQGENTRGL…VPCFNMLSGR (166 aa). 75 to 82 serves as a coordination point for ATP; that stretch reads HQMGMGKT. A DEAH box motif is present at residues 168 to 171; sequence DEAH. Residues 417–599 form the Helicase C-terminal domain; it reads QCLQPLKVLE…HLNSAFRDLL (183 aa).

Belongs to the DEAD box helicase family. DEAH subfamily. As to quaternary structure, part of the viral DNA-directed RNA polymerase that consists of 8 polII-like subunits (RPB1, RPB2, RPB3, RPB5, RPB6, RPB7, RPB9, RPB10), a capping enzyme and a termination factor.

It is found in the virion. In terms of biological role, putative DNA-dependent ATPase required for providing the needed energy to achieve the termination of early transcripts. The sequence is that of Termination factor NPH-I homolog from African swine fever virus (isolate Warthog/Namibia/Wart80/1980) (ASFV).